Here is a 417-residue protein sequence, read N- to C-terminus: Exodeoxyribonuclease 7 large subunit (417 aa).

It belongs to the XseA family. Heterooligomer composed of large and small subunits.

The protein localises to the cytoplasm. The enzyme catalyses Exonucleolytic cleavage in either 5'- to 3'- or 3'- to 5'-direction to yield nucleoside 5'-phosphates.. In terms of biological role, bidirectionally degrades single-stranded DNA into large acid-insoluble oligonucleotides, which are then degraded further into small acid-soluble oligonucleotides. This is Exodeoxyribonuclease 7 large subunit from Corynebacterium glutamicum (strain ATCC 13032 / DSM 20300 / JCM 1318 / BCRC 11384 / CCUG 27702 / LMG 3730 / NBRC 12168 / NCIMB 10025 / NRRL B-2784 / 534).